We begin with the raw amino-acid sequence, 188 residues long: GTPase KRas (188 aa).

Residues 10-18 (GAGGVGKSA), 29-35 (VDEYDPT), 59-60 (AG), and 116-119 (NKCD) each bind GTP. An Effector region motif is present at residues 32-40 (YDPTIEDSY). The disordered stretch occupies residues 167-188 (KEKMSKEGKKKKKKSKTKCVLM). Cys185 carries the post-translational modification Cysteine methyl ester. A lipid anchor (S-farnesyl cysteine) is attached at Cys185. Positions 186 to 188 (VLM) are cleaved as a propeptide — removed in mature form.

The protein belongs to the small GTPase superfamily. Ras family.

The protein resides in the cell membrane. Its subcellular location is the cytoplasm. The catalysed reaction is GTP + H2O = GDP + phosphate + H(+). Its activity is regulated as follows. Alternates between an inactive form bound to GDP and an active form bound to GTP. Activated by a guanine nucleotide-exchange factor (GEF) and inactivated by a GTPase-activating protein (GAP). In terms of biological role, ras proteins bind GDP/GTP and possess intrinsic GTPase activity. Plays an important role in the regulation of cell proliferation. May play a role in promoting oncogenic events by inducing transcriptional silencing of tumor suppressor genes (TSGs). The chain is GTPase KRas (kras) from Cyprinus carpio (Common carp).